We begin with the raw amino-acid sequence, 268 residues long: Virulence plasmid ParA family protein pGP5-D (268 aa).

Phe13–Thr20 is an ATP binding site.

The protein belongs to the ParA family.

This is Virulence plasmid ParA family protein pGP5-D from Chlamydia muridarum (strain MoPn / Nigg).